Here is a 715-residue protein sequence, read N- to C-terminus: Methionine--tRNA ligase (715 aa).

Residues 17-27 (PYANGPIHLGH) carry the 'HIGH' region motif. 4 residues coordinate Zn(2+): cysteine 148, cysteine 151, cysteine 161, and cysteine 164. Residues 359–363 (KMSKS) carry the 'KMSKS' region motif. ATP is bound at residue lysine 362. One can recognise a tRNA-binding domain in the interval 614 to 715 (DLSKVELRVG…KDAKPGDRLK (102 aa)).

The protein belongs to the class-I aminoacyl-tRNA synthetase family. MetG type 1 subfamily. Homodimer. It depends on Zn(2+) as a cofactor.

It is found in the cytoplasm. It carries out the reaction tRNA(Met) + L-methionine + ATP = L-methionyl-tRNA(Met) + AMP + diphosphate. Its function is as follows. Is required not only for elongation of protein synthesis but also for the initiation of all mRNA translation through initiator tRNA(fMet) aminoacylation. The sequence is that of Methionine--tRNA ligase from Leptospira interrogans serogroup Icterohaemorrhagiae serovar Lai (strain 56601).